The chain runs to 85 residues: Large ribosomal subunit protein bL27 (85 aa).

Belongs to the bacterial ribosomal protein bL27 family.

The polypeptide is Large ribosomal subunit protein bL27 (Stutzerimonas stutzeri (strain A1501) (Pseudomonas stutzeri)).